Reading from the N-terminus, the 913-residue chain is Protein translocase subunit SecA (913 aa).

Residues Gln-87, 105 to 109 (GEGKT), and Asp-512 each bind ATP. The Zn(2+) site is built by Cys-897, Cys-899, Cys-908, and His-909.

The protein belongs to the SecA family. In terms of assembly, monomer and homodimer. Part of the essential Sec protein translocation apparatus which comprises SecA, SecYEG and auxiliary proteins SecDF-YajC and YidC. Requires Zn(2+) as cofactor.

It localises to the cell inner membrane. Its subcellular location is the cytoplasm. The catalysed reaction is ATP + H2O + cellular proteinSide 1 = ADP + phosphate + cellular proteinSide 2.. Its function is as follows. Part of the Sec protein translocase complex. Interacts with the SecYEG preprotein conducting channel. Has a central role in coupling the hydrolysis of ATP to the transfer of proteins into and across the cell membrane, serving both as a receptor for the preprotein-SecB complex and as an ATP-driven molecular motor driving the stepwise translocation of polypeptide chains across the membrane. The protein is Protein translocase subunit SecA of Pseudomonas syringae pv. syringae (strain B728a).